The primary structure comprises 455 residues: Golgi pH regulator A (455 aa).

5 consecutive transmembrane segments (helical) span residues 5-25 (IDSS…WLFF), 46-66 (VTFA…LGVL), 79-99 (LCVI…YFIV), 114-134 (CLLW…FPIL), and 150-170 (VGVI…VNCP). N180 and N243 each carry an N-linked (GlcNAc...) asparagine glycan. The next 4 membrane-spanning stretches (helical) occupy residues 290–310 (GYFF…NIVF), 343–363 (ISFI…LITL), 378–398 (VIVL…VLLI), and 425–445 (WFDV…YLAH).

The protein belongs to the Golgi pH regulator (TC 1.A.38) family. In terms of assembly, homotrimer. Interacts with RABL3; the interaction stabilizes GPR89A. As to expression, ubiquitous.

The protein localises to the golgi apparatus membrane. It carries out the reaction iodide(out) = iodide(in). It catalyses the reaction chloride(in) = chloride(out). The enzyme catalyses bromide(in) = bromide(out). The catalysed reaction is fluoride(in) = fluoride(out). In terms of biological role, voltage-gated channel that enables the transfer of monoatomic anions such as iodide, chloride, bromide and fluoride which may function in counter-ion conductance and participates in Golgi acidification. Plays a role in lymphocyte development, probably by acting as a RABL3 effector in hematopoietic cells. This chain is Golgi pH regulator A, found in Homo sapiens (Human).